Here is a 305-residue protein sequence, read N- to C-terminus: Cytochrome c biogenesis protein CcsA (305 aa).

The next 8 membrane-spanning stretches (helical) occupy residues 13 to 33, 42 to 62, 70 to 90, 97 to 117, 135 to 155, 212 to 232, 242 to 262, and 276 to 296; these read IYFSFILVITLVFGGTLVYPV, KGIIFPFFCITLNLIIRWFYS, LYESLMFFSWNFCLIPFFIDI, WIGVITAPSALFTHAFATLIL, WLIMHVTIIFLGYVTLLCGSL, YTIVIGFTFLTIGILSGAVWA, WDPKEIWALITWLIFANYIHI, and VASLGLFFVWICYFGVNILGI.

It belongs to the CcmF/CycK/Ccl1/NrfE/CcsA family. As to quaternary structure, may interact with Ccs1.

It is found in the plastid. It localises to the chloroplast thylakoid membrane. Required during biogenesis of c-type cytochromes (cytochrome c6 and cytochrome f) at the step of heme attachment. The sequence is that of Cytochrome c biogenesis protein CcsA from Welwitschia mirabilis (Tree tumbo).